The primary structure comprises 347 residues: Probable nitronate monooxygenase (347 aa).

Residues Asn69, Gln171, Gly176, Gly213, and 232 to 235 (QIGS) contribute to the FMN site.

Belongs to the nitronate monooxygenase family. NMO class I subfamily. FMN is required as a cofactor.

The enzyme catalyses 3 propionate 3-nitronate + 3 O2 + H2O = 3 3-oxopropanoate + 2 nitrate + nitrite + H2O2 + 3 H(+). In terms of biological role, nitronate monooxygenase that uses molecular oxygen to catalyze the oxidative denitrification of alkyl nitronates. Acts on propionate 3-nitronate (P3N), the presumed physiological substrate. Probably functions in the detoxification of P3N, a metabolic poison produced by plants and fungi as a defense mechanism. In Bacillus subtilis (strain 168), this protein is Probable nitronate monooxygenase (yrpB).